A 177-amino-acid chain; its full sequence is ATP synthase subunit delta (177 aa).

This sequence belongs to the ATPase delta chain family. In terms of assembly, F-type ATPases have 2 components, F(1) - the catalytic core - and F(0) - the membrane proton channel. F(1) has five subunits: alpha(3), beta(3), gamma(1), delta(1), epsilon(1). F(0) has three main subunits: a(1), b(2) and c(10-14). The alpha and beta chains form an alternating ring which encloses part of the gamma chain. F(1) is attached to F(0) by a central stalk formed by the gamma and epsilon chains, while a peripheral stalk is formed by the delta and b chains.

The protein localises to the cell inner membrane. Functionally, f(1)F(0) ATP synthase produces ATP from ADP in the presence of a proton or sodium gradient. F-type ATPases consist of two structural domains, F(1) containing the extramembraneous catalytic core and F(0) containing the membrane proton channel, linked together by a central stalk and a peripheral stalk. During catalysis, ATP synthesis in the catalytic domain of F(1) is coupled via a rotary mechanism of the central stalk subunits to proton translocation. Its function is as follows. This protein is part of the stalk that links CF(0) to CF(1). It either transmits conformational changes from CF(0) to CF(1) or is implicated in proton conduction. This is ATP synthase subunit delta from Shewanella pealeana (strain ATCC 700345 / ANG-SQ1).